The following is a 167-amino-acid chain: Schlafen-like protein (167 aa).

It belongs to the Schlafen family. Subgroup poxviridae B3 subfamily.

The polypeptide is Schlafen-like protein (Bos taurus (Bovine)).